The chain runs to 153 residues: 3-hydroxyacyl-[acyl-carrier-protein] dehydratase FabZ (153 aa).

His57 is an active-site residue.

The protein belongs to the thioester dehydratase family. FabZ subfamily.

The protein localises to the cytoplasm. It catalyses the reaction a (3R)-hydroxyacyl-[ACP] = a (2E)-enoyl-[ACP] + H2O. Functionally, involved in unsaturated fatty acids biosynthesis. Catalyzes the dehydration of short chain beta-hydroxyacyl-ACPs and long chain saturated and unsaturated beta-hydroxyacyl-ACPs. The sequence is that of 3-hydroxyacyl-[acyl-carrier-protein] dehydratase FabZ from Aeromonas salmonicida (strain A449).